Consider the following 1342-residue polypeptide: DNA-directed RNA polymerase subunit beta (1342 aa).

Belongs to the RNA polymerase beta chain family. In terms of assembly, the RNAP catalytic core consists of 2 alpha, 1 beta, 1 beta' and 1 omega subunit. When a sigma factor is associated with the core the holoenzyme is formed, which can initiate transcription.

The enzyme catalyses RNA(n) + a ribonucleoside 5'-triphosphate = RNA(n+1) + diphosphate. Functionally, DNA-dependent RNA polymerase catalyzes the transcription of DNA into RNA using the four ribonucleoside triphosphates as substrates. The protein is DNA-directed RNA polymerase subunit beta of Buchnera aphidicola subsp. Acyrthosiphon pisum (strain Tuc7).